Consider the following 202-residue polypeptide: Endothelin-1 (202 aa).

A signal peptide spans 1–25 (MDYFPMIFALLFVAFQGAPEAAVLG). A propeptide spanning residues 26 to 50 (TELSTGAESGGERPVPTTPWRPRRS) is cleaved from the precursor. The tract at residues 29–48 (STGAESGGERPVPTTPWRPR) is disordered. Cystine bridges form between cysteine 53–cysteine 67 and cysteine 55–cysteine 63. Residues 74 to 202 (VNTPEHVVPY…DKKVIYSRAH (129 aa)) constitute a propeptide that is removed on maturation. The segment at 110–124 (CQCASQTDKKCQNFC) is endothelin-like.

It belongs to the endothelin/sarafotoxin family.

The protein localises to the secreted. Its function is as follows. Endothelins are endothelium-derived vasoconstrictor peptides. Probable ligand for G-protein coupled receptors EDNRA and EDNRB which activates PTK2B, BCAR1, BCAR3 and, GTPases RAP1 and RHOA cascade in glomerular mesangial cells. Also binds the DEAR/FBXW7-AS1 receptor. Promotes mesenteric arterial wall remodeling via activation of ROCK signaling and subsequent colocalization of NFATC3 with F-actin filaments. NFATC3 then translocates to the nucleus where it subsequently promotes the transcription of the smooth muscle hypertrophy and differentiation marker ACTA2. The protein is Endothelin-1 (EDN1) of Ovis aries (Sheep).